Consider the following 274-residue polypeptide: Urease accessory protein UreD (274 aa).

The protein belongs to the UreD family. In terms of assembly, ureD, UreF and UreG form a complex that acts as a GTP-hydrolysis-dependent molecular chaperone, activating the urease apoprotein by helping to assemble the nickel containing metallocenter of UreC. The UreE protein probably delivers the nickel.

It localises to the cytoplasm. Functionally, required for maturation of urease via the functional incorporation of the urease nickel metallocenter. This is Urease accessory protein UreD from Enterobacter sp. (strain 638).